The sequence spans 461 residues: MDQSNRYANLNLTEKDLIAGGRHVLCAYIMKPKAGFGNFLQTAAHFAAESSTGTNVEVSTTDDFTRGVDALVYEIDEAKQLMKIAYPIDLFDRNIIDGRAMIASFLTLTIGNNQGMGDVEYAKMYDFYVPPAYLKLFDGPSTTIKDLWRVLGRPVVDGGFIVGTIIKPKLGLRPQPFANACYDFWLGGDFIKNDEPQGNQVFAPFKETVRLVNDAMRRAQDKTGQPKLFSFNITADDHHEMVARGEYILETFADNADHIAFLVDGYVAGPAAVTTARRRFPKQYLHYHRAGHGAVTSPQAKRGYTAFVLSKMARLQGASGIHTGTMGFGKMEGEAADRAMAYMITEDSADGPYFHQEWLGMNPTTPIISGGMNALRMPGFFKNLGHSNLIMTAGGGAFGHIDGGAAGAKSLRQAEQCWKEGADPVAFAKEHREFARAFESFPHDADALYPNWRGQLGLAAA.

Asn112 provides a ligand contact to substrate. Lys167 serves as the catalytic Proton acceptor. Lys169 is a substrate binding site. Mg(2+) is bound by residues Lys192, Asp194, and Glu195. An N6-carboxylysine modification is found at Lys192. The active-site Proton acceptor is the His288. Positions 289, 322, and 369 each coordinate substrate.

The protein belongs to the RuBisCO large chain family. Type II subfamily. Homodimer. It depends on Mg(2+) as a cofactor.

It carries out the reaction 2 (2R)-3-phosphoglycerate + 2 H(+) = D-ribulose 1,5-bisphosphate + CO2 + H2O. It catalyses the reaction D-ribulose 1,5-bisphosphate + O2 = 2-phosphoglycolate + (2R)-3-phosphoglycerate + 2 H(+). RuBisCO catalyzes two reactions: the carboxylation of D-ribulose 1,5-bisphosphate, the primary event in carbon dioxide fixation, as well as the oxidative fragmentation of the pentose substrate. Both reactions occur simultaneously and in competition at the same active site. In Rhodopseudomonas palustris (strain BisB18), this protein is Ribulose bisphosphate carboxylase.